The following is a 273-amino-acid chain: NADPH-dependent 7-cyano-7-deazaguanine reductase (273 aa).

Substrate is bound at residue 80–82 (VES). Residue 82-83 (SK) coordinates NADPH. The Thioimide intermediate role is filled by Cys-180. Asp-187 acts as the Proton donor in catalysis. Residue 219 to 220 (HE) participates in substrate binding. 248 to 249 (RG) lines the NADPH pocket.

The protein belongs to the GTP cyclohydrolase I family. QueF type 2 subfamily. Homodimer.

The protein resides in the cytoplasm. It carries out the reaction 7-aminomethyl-7-carbaguanine + 2 NADP(+) = 7-cyano-7-deazaguanine + 2 NADPH + 3 H(+). It functions in the pathway tRNA modification; tRNA-queuosine biosynthesis. Catalyzes the NADPH-dependent reduction of 7-cyano-7-deazaguanine (preQ0) to 7-aminomethyl-7-deazaguanine (preQ1). The polypeptide is NADPH-dependent 7-cyano-7-deazaguanine reductase (Bordetella bronchiseptica (strain ATCC BAA-588 / NCTC 13252 / RB50) (Alcaligenes bronchisepticus)).